The sequence spans 281 residues: Small ribosomal subunit protein uS3 (281 aa).

Residues 38 to 106 (IRRLLSTGLE…QVQLNILEVK (69 aa)) form the KH type-2 domain. Positions 218 to 281 (APAGAERARR…VTHEPQIAES (64 aa)) are disordered. The segment covering 238 to 252 (SGAAGTTVTGTDAGR) has biased composition (low complexity).

The protein belongs to the universal ribosomal protein uS3 family. In terms of assembly, part of the 30S ribosomal subunit. Forms a tight complex with proteins S10 and S14.

Its function is as follows. Binds the lower part of the 30S subunit head. Binds mRNA in the 70S ribosome, positioning it for translation. This chain is Small ribosomal subunit protein uS3, found in Mycobacterium leprae (strain TN).